The primary structure comprises 212 residues: Cytidylate kinase (212 aa).

Residue 7-15 (GPAASGKGT) coordinates ATP.

The protein belongs to the cytidylate kinase family. Type 1 subfamily.

Its subcellular location is the cytoplasm. It catalyses the reaction CMP + ATP = CDP + ADP. It carries out the reaction dCMP + ATP = dCDP + ADP. This Rhodopseudomonas palustris (strain BisB5) protein is Cytidylate kinase.